The chain runs to 513 residues: MDNNEIIGYTIGETRIDELTFLAKEAPKVGDYVKINYDDSELLGMVESTIQGNMALEDILNIEHLEKIREFEDNSSYYILGKIKVLGDIRDLNKDGALKLPRVPPKPGIPIYRADDELLKKVFGNGHLKIGHLVTREDVEVKLDANKLCSRHLAILAMTGMGKSNTVAVLLRELNKLKATVLVFDMHGEYKDIYCESEKLRVHIIEPKINIYRINDDDLCDLAGVDAQATKQRPYIRKAIKEIKEERKEHDFSTVDDYINAIIGKLEEYKSNDNYKKDESSIQTAIFRLEDMLQFRKNIITLHYNPINDIREHYINIIPMEELDENAVDIVVSYIAKAVLDDRKRIIIDKGRDFAKPIFMIFEEAHLIAPQHRKTRAKHYLSRIAREGRKFGVGLCLVSQRPKTLDAETLSQCSNLIISKLIEPTDQKHVQMASENLSEDLVKQLTSLNIGEAIILGPCIKVPAIVKVDKFDGRYGGEDLNLVELWEKDFINTERLKTDDIEENAFGDDDLFS.

ATP is bound by residues Arg151, 160-165 (GMGKSN), and 467-468 (KV).

The protein belongs to the HerA family.

It carries out the reaction Couples ATP hydrolysis with the unwinding of duplex DNA at the replication fork by translocating in the 5'-3' direction. This creates two antiparallel DNA single strands (ssDNA). The leading ssDNA polymer is the template for DNA polymerase III holoenzyme which synthesizes a continuous strand.. It catalyses the reaction ATP + H2O = ADP + phosphate + H(+). The enzyme catalyses Couples ATP hydrolysis with the unwinding of duplex DNA by translocating in the 3'-5' direction.. Functionally, a probably bidirectional DNA helicase. In Methanocaldococcus jannaschii (strain ATCC 43067 / DSM 2661 / JAL-1 / JCM 10045 / NBRC 100440) (Methanococcus jannaschii), this protein is Probable helicase MJ1565.